Reading from the N-terminus, the 136-residue chain is Histone H3 (136 aa).

Belongs to the histone H3 family. In terms of assembly, the nucleosome is a histone octamer containing two molecules each of H2A, H2B, H3 and H4 assembled in one H3-H4 heterotetramer and two H2A-H2B heterodimers. The octamer wraps approximately 147 bp of DNA.

The protein resides in the nucleomorph. Its subcellular location is the chromosome. In terms of biological role, core component of nucleosome. Nucleosomes wrap and compact DNA into chromatin, limiting DNA accessibility to the cellular machineries which require DNA as a template. Histones thereby play a central role in transcription regulation, DNA repair, DNA replication and chromosomal stability. DNA accessibility is regulated via a complex set of post-translational modifications of histones, also called histone code, and nucleosome remodeling. The sequence is that of Histone H3 from Guillardia theta (Cryptophyte).